The sequence spans 956 residues: MSTHQGGSVHSIRPFKSSEEYLYAMKEDLAEWLKDMYHLEIIVDNFIEILENGSVLCQHANNVTEVAREFFVQYPHLAEKLQLPKSGVKLNMMAQPGSFLARDNVSNFIQWCRKEMDIKDVIMFETEDLVHRKNEKNFLLCLLELARRASRFGMSAPMLIQMEEQIEEEIRQEMDLPPQEIPVPKPQRKLCDFKNLDQMVQNLVSRCTCPVQFSMVKVSEGKYRVGESSTLIFVRILRKHVMVRVGGGWDTLAHYLDKHDPCHCASLSHKPAIKLGSLQKQVSAVHEVKTQLTPRLDNPSKLETTLILSRSQSPLPPVEWRTYSAERTRTISSSYSLDDNENSPSFKNSQTPPNDRRSMSIGAHERSATLSRKLFTEDTQDPQQLGNPQSGHYRHHHSTSSLASQLTGSEEEYSYISEVFSESQSGRQMGKHTVMNLKEPPKRDAFLSHTQSANRKVISATQQNNIQQGLIIGHQSVTVQDSRPKTPSRFIQPPSPSKQIHFFYNQQNKGVEQNIKTQTNSCTRSSSPVKQTSLTYKQEFNKRPATPSRINYSSSQYKDGDKSAATEIITFHDHVRAKPSVSSEERTIRTGRATPTIHLNRENTNLPLKMQPKPNVTESSHSIERDCMYTPLPIDPEQEKQIYRSLEDEIRTNIKILEGDSEENNPENDTAAHDFNVLGKSTLRLSSSTSKTPRGQEGVPRSGVYINTAWQSGASYDDVITELTKGHVKLNNVDVENWISKIPLKGMVKEAHTSQRNKVRENGHTASLVRKKTLSTEMKGSKQKQLPSQIARQLALENKKKTVENVLEKQVSTVSGDSKEAIPEKIKLSQGLKPKKSLKKPERVPSIYKLKLRPKIRPRRDNRPEKKPSRIPTPVSYRQVPSRNNAKALKRTQSYQANKVSVAQTLNESQISAVNSEDLDSGDEICEHSAPLQAVETPITGENNQSRTEEEEESWV.

The Calponin-homology (CH) domain maps to 23 to 150 (YAMKEDLAEW…CLLELARRAS (128 aa)). One can recognise a GAR domain in the interval 191 to 263 (CDFKNLDQMV…HYLDKHDPCH (73 aa)). Polar residues-rich tracts occupy residues 332–353 (SSSYSLDDNENSPSFKNSQTPP) and 381–390 (DPQQLGNPQS). Disordered stretches follow at residues 332–361 (SSSYSLDDNENSPSFKNSQTPPNDRRSMSI), 378–406 (DTQDPQQLGNPQSGHYRHHHSTSSLASQL), 853–885 (RPKIRPRRDNRPEKKPSRIPTPVSYRQVPSRNN), and 914–956 (VNSE…ESWV). A compositionally biased stretch (basic and acidic residues) spans 859–868 (RRDNRPEKKP).

It belongs to the GAS2 family.

It is found in the cytoplasm. The protein localises to the cytoskeleton. The protein resides in the cilium basal body. In terms of biological role, together with gas2l2.L, regulates ciliary orientation and performance. This is GAS2-like protein 2B from Xenopus laevis (African clawed frog).